A 299-amino-acid chain; its full sequence is Oxygen-dependent coproporphyrinogen-III oxidase (299 aa).

S92 contributes to the substrate binding site. H96 and H106 together coordinate a divalent metal cation. Residue H106 is the Proton donor of the active site. 108-110 serves as a coordination point for substrate; that stretch reads NVR. 2 residues coordinate a divalent metal cation: H145 and H175. The interval 239-274 is important for dimerization; sequence YVEFNLVYDRGTLFGLQSGGRAESILMSLPPRVRWE. 257-259 is a binding site for substrate; it reads GGR.

The protein belongs to the aerobic coproporphyrinogen-III oxidase family. In terms of assembly, homodimer. A divalent metal cation is required as a cofactor.

The protein resides in the cytoplasm. The catalysed reaction is coproporphyrinogen III + O2 + 2 H(+) = protoporphyrinogen IX + 2 CO2 + 2 H2O. It functions in the pathway porphyrin-containing compound metabolism; protoporphyrin-IX biosynthesis; protoporphyrinogen-IX from coproporphyrinogen-III (O2 route): step 1/1. Functionally, involved in the heme biosynthesis. Catalyzes the aerobic oxidative decarboxylation of propionate groups of rings A and B of coproporphyrinogen-III to yield the vinyl groups in protoporphyrinogen-IX. The protein is Oxygen-dependent coproporphyrinogen-III oxidase of Xanthomonas axonopodis pv. citri (strain 306).